A 637-amino-acid polypeptide reads, in one-letter code: Chaperone protein HtpG (637 aa).

The segment at 1-345 is a; substrate-binding; sequence MSQQETHGFQ…SNDLPLNVSR (345 aa). The b stretch occupies residues 346 to 562; the sequence is EILQDNHVTK…EGEMSTQMIK (217 aa). Residues 563–637 form a c region; that stretch reads LMQAAGQPVP…MNQMLLANMK (75 aa).

It belongs to the heat shock protein 90 family. As to quaternary structure, homodimer.

Its subcellular location is the cytoplasm. Functionally, molecular chaperone. Has ATPase activity. The protein is Chaperone protein HtpG of Shewanella baltica (strain OS185).